Consider the following 231-residue polypeptide: Large ribosomal subunit protein uL1 (231 aa).

The protein belongs to the universal ribosomal protein uL1 family. As to quaternary structure, part of the 50S ribosomal subunit.

Binds directly to 23S rRNA. The L1 stalk is quite mobile in the ribosome, and is involved in E site tRNA release. Its function is as follows. Protein L1 is also a translational repressor protein, it controls the translation of the L11 operon by binding to its mRNA. This is Large ribosomal subunit protein uL1 from Staphylococcus carnosus (strain TM300).